A 135-amino-acid chain; its full sequence is Kappa-casein (135 aa).

O-linked (GalNAc...) threonine glycosylation occurs at Thr96. Ser114 is modified (phosphoserine; alternate). An O-linked (GalNAc...) serine; alternate glycan is attached at Ser114. O-linked (GalNAc...) threonine glycosylation is present at Thr131. Ser132 carries the post-translational modification Phosphoserine.

This sequence belongs to the kappa-casein family. Mammary gland specific. Secreted in milk.

It is found in the secreted. In terms of biological role, kappa-casein stabilizes micelle formation, preventing casein precipitation in milk. In Equus grevyi (Grevy's zebra), this protein is Kappa-casein (CSN3).